The primary structure comprises 906 residues: ATP-dependent DNA helicase DDX11 (906 aa).

The Helicase ATP-binding domain maps to glycine 9–leucine 442. Position 44-51 (serine 44–serine 51) interacts with ATP. The tract at residues alanine 78–aspartate 111 is disordered. Residues serine 85 to serine 96 are compositionally biased toward low complexity. Serine 260 is modified (phosphoserine). 2 residues coordinate [4Fe-4S] cluster: cysteine 265 and cysteine 283. The span at valine 284–proline 301 shows a compositional bias: basic and acidic residues. The segment at valine 284–threonine 310 is disordered. Cysteine 312 and cysteine 347 together coordinate [4Fe-4S] cluster. The DEAH box motif lies at aspartate 390 to histidine 393.

The protein belongs to the DEAD box helicase family. DEAH subfamily. DDX11/CHL1 sub-subfamily. In terms of assembly, associates with the CTF18-RFC complex. Associates with a cohesin complex composed of RAD21, SMC1 proteins and SMC3. Interacts with CHTF18. Interacts with DSCC1. Interacts with FEN1; this interaction is direct and increases flap endonuclease activity of FEN1. Interacts with PCNA. Interacts with POLR1A and UBTF. Interacts with RAD21, SMC1 proteins and SMC3. Interacts with RFC2. Interacts with TIMELESS; this interaction increases recruitment of both proteins onto chromatin in response to replication stress induction by hydroxyurea. The cofactor is [4Fe-4S] cluster.

Its subcellular location is the nucleus. It localises to the nucleolus. The protein localises to the cytoplasm. The protein resides in the cytoskeleton. It is found in the spindle pole. Its subcellular location is the midbody. It localises to the microtubule organizing center. The protein localises to the centrosome. The catalysed reaction is Couples ATP hydrolysis with the unwinding of duplex DNA at the replication fork by translocating in the 5'-3' direction. This creates two antiparallel DNA single strands (ssDNA). The leading ssDNA polymer is the template for DNA polymerase III holoenzyme which synthesizes a continuous strand.. It catalyses the reaction ATP + H2O = ADP + phosphate + H(+). Its function is as follows. DNA-dependent ATPase and ATP-dependent DNA helicase that participates in various functions in genomic stability, including DNA replication, DNA repair and heterochromatin organization as well as in ribosomal RNA synthesis. Its double-stranded DNA helicase activity requires either a minimal 5'-single-stranded tail length of approximately 15 nt (flap substrates) or 10 nt length single-stranded gapped DNA substrates of a partial duplex DNA structure for helicase loading and translocation along DNA in a 5' to 3' direction. The helicase activity is capable of displacing duplex regions up to 100 bp, which can be extended up to 500 bp by the replication protein A (RPA) or the cohesion CTF18-replication factor C (Ctf18-RFC) complex activities. Also shows ATPase- and helicase activities on substrates that mimic key DNA intermediates of replication, repair and homologous recombination reactions, including forked duplex, anti-parallel G-quadruplex and three-stranded D-loop DNA molecules. Plays a role in DNA double-strand break (DSB) repair at the DNA replication fork during DNA replication recovery from DNA damage. Recruited with TIMELESS factor upon DNA-replication stress response at DNA replication fork to preserve replication fork progression, and hence ensure DNA replication fidelity. Also cooperates with TIMELESS factor during DNA replication to regulate proper sister chromatid cohesion and mitotic chromosome segregation. Stimulates 5'-single-stranded DNA flap endonuclease activity of FEN1 in an ATP- and helicase-independent manner; and hence it may contribute in Okazaki fragment processing at DNA replication fork during lagging strand DNA synthesis. Its ability to function at DNA replication fork is modulated by its binding to long non-coding RNA (lncRNA) cohesion regulator non-coding RNA DDX11-AS1/CONCR, which is able to increase both DDX11 ATPase activity and binding to DNA replicating regions. Also plays a role in heterochromatin organization. Involved in rRNA transcription activation through binding to active hypomethylated rDNA gene loci by recruiting UBTF and the RNA polymerase Pol I transcriptional machinery. Plays a role in embryonic development and prevention of aneuploidy. Involved in melanoma cell proliferation and survival. Associates with chromatin at DNA replication fork regions. Binds to single- and double-stranded DNAs. The protein is ATP-dependent DNA helicase DDX11 of Mus musculus (Mouse).